A 397-amino-acid chain; its full sequence is Enoyl-[acyl-carrier-protein] reductase [NADH] (397 aa).

Residues 48–53 (GASTGY), 74–75 (LE), 111–112 (DA), and 139–140 (LA) each bind NAD(+). Tyr225 lines the substrate pocket. Catalysis depends on Tyr235, which acts as the Proton donor. NAD(+) contacts are provided by residues Lys244 and 273–275 (VVT).

It belongs to the TER reductase family. In terms of assembly, monomer.

It carries out the reaction a 2,3-saturated acyl-[ACP] + NAD(+) = a (2E)-enoyl-[ACP] + NADH + H(+). It participates in lipid metabolism; fatty acid biosynthesis. Its function is as follows. Involved in the final reduction of the elongation cycle of fatty acid synthesis (FAS II). Catalyzes the reduction of a carbon-carbon double bond in an enoyl moiety that is covalently linked to an acyl carrier protein (ACP). The chain is Enoyl-[acyl-carrier-protein] reductase [NADH] from Tolumonas auensis (strain DSM 9187 / NBRC 110442 / TA 4).